The sequence spans 92 residues: Small ribosomal subunit protein uS19 (92 aa).

Belongs to the universal ribosomal protein uS19 family.

Functionally, protein S19 forms a complex with S13 that binds strongly to the 16S ribosomal RNA. In Corynebacterium jeikeium (strain K411), this protein is Small ribosomal subunit protein uS19.